Consider the following 203-residue polypeptide: Protein-methionine-sulfoxide reductase heme-binding subunit MsrQ (203 aa).

The next 6 membrane-spanning stretches (helical) occupy residues 10 to 30 (IFVV…MSLL), 42 to 62 (LGLG…LQKL), 75 to 95 (LGLW…FFIL), 110 to 130 (PYII…ITSN), 147 to 167 (LVYA…RSDL), and 169 to 189 (EWSI…PAVA).

This sequence belongs to the MsrQ family. In terms of assembly, heterodimer of a catalytic subunit (MsrP) and a heme-binding subunit (MsrQ). It depends on FMN as a cofactor. Requires heme b as cofactor.

Its subcellular location is the cell inner membrane. Functionally, part of the MsrPQ system that repairs oxidized periplasmic proteins containing methionine sulfoxide residues (Met-O), using respiratory chain electrons. Thus protects these proteins from oxidative-stress damage caused by reactive species of oxygen and chlorine generated by the host defense mechanisms. MsrPQ is essential for the maintenance of envelope integrity under bleach stress, rescuing a wide series of structurally unrelated periplasmic proteins from methionine oxidation. MsrQ provides electrons for reduction to the reductase catalytic subunit MsrP, using the quinone pool of the respiratory chain. The chain is Protein-methionine-sulfoxide reductase heme-binding subunit MsrQ from Pseudomonas putida (strain GB-1).